A 118-amino-acid polypeptide reads, in one-letter code: Large ribosomal subunit protein bL20 (118 aa).

The protein belongs to the bacterial ribosomal protein bL20 family.

Its function is as follows. Binds directly to 23S ribosomal RNA and is necessary for the in vitro assembly process of the 50S ribosomal subunit. It is not involved in the protein synthesizing functions of that subunit. The chain is Large ribosomal subunit protein bL20 from Bacillus mycoides (strain KBAB4) (Bacillus weihenstephanensis).